A 587-amino-acid polypeptide reads, in one-letter code: Tectonic-1 (587 aa).

The N-terminal stretch at 1 to 22 (MRPRGLPPLLVVLLGCWASVSA) is a signal peptide. Asparagine 36 carries N-linked (GlcNAc...) asparagine glycosylation. Residues 46–68 (GTFPSTRPPGTPRAPGPSSGPRP) form a disordered region. A compositionally biased stretch (pro residues) spans 51–68 (TRPPGTPRAPGPSSGPRP). N-linked (GlcNAc...) asparagine glycosylation is found at asparagine 295 and asparagine 528.

The protein belongs to the tectonic family. As to quaternary structure, part of the tectonic-like complex (also named B9 complex).

It localises to the cytoplasm. The protein localises to the cytoskeleton. The protein resides in the cilium basal body. It is found in the secreted. Component of the tectonic-like complex, a complex localized at the transition zone of primary cilia and acting as a barrier that prevents diffusion of transmembrane proteins between the cilia and plasma membranes. Regulator of Hedgehog (Hh), required for both activation and inhibition of the Hh pathway in the patterning of the neural tube. During neural tube development, it is required for formation of the most ventral cell types and for full Hh pathway activation. Functions in Hh signal transduction to fully activate the pathway in the presence of high Hh levels and to repress the pathway in the absence of Hh signals. Modulates Hh signal transduction downstream of SMO and RAB23. The polypeptide is Tectonic-1 (TCTN1) (Homo sapiens (Human)).